The following is a 513-amino-acid chain: ATP synthase subunit alpha (513 aa).

Residue 169 to 176 (GDRQTGKT) coordinates ATP.

Belongs to the ATPase alpha/beta chains family. F-type ATPases have 2 components, CF(1) - the catalytic core - and CF(0) - the membrane proton channel. CF(1) has five subunits: alpha(3), beta(3), gamma(1), delta(1), epsilon(1). CF(0) has three main subunits: a(1), b(2) and c(9-12). The alpha and beta chains form an alternating ring which encloses part of the gamma chain. CF(1) is attached to CF(0) by a central stalk formed by the gamma and epsilon chains, while a peripheral stalk is formed by the delta and b chains.

It is found in the cell inner membrane. It catalyses the reaction ATP + H2O + 4 H(+)(in) = ADP + phosphate + 5 H(+)(out). In terms of biological role, produces ATP from ADP in the presence of a proton gradient across the membrane. The alpha chain is a regulatory subunit. In Cronobacter sakazakii (strain ATCC BAA-894) (Enterobacter sakazakii), this protein is ATP synthase subunit alpha.